Consider the following 610-residue polypeptide: Granule-bound starch synthase 1, chloroplastic/amyloplastic (610 aa).

The transit peptide at 1–79 (MATVTASSNF…SKVKTAGKIV (79 aa)) directs the protein to the chloroplast. Lysine 98 contributes to the ADP-alpha-D-glucose binding site. Residues 438 to 454 (TGKKKMEAQILELEEKF) are a coiled coil.

It belongs to the glycosyltransferase 1 family. Bacterial/plant glycogen synthase subfamily. As to quaternary structure, interacts with PTST. This interaction is critical for the localization to starch granules. Expressed in roots, inflorescences, flowers, fruits and at much higher levels in leaves.

It localises to the plastid. The protein localises to the chloroplast. The enzyme catalyses an NDP-alpha-D-glucose + [(1-&gt;4)-alpha-D-glucosyl](n) = [(1-&gt;4)-alpha-D-glucosyl](n+1) + a ribonucleoside 5'-diphosphate + H(+). It participates in glycan biosynthesis; starch biosynthesis. In terms of biological role, required for the synthesis of amylose. Destroyed as it is released from the starch granules during the night. The circadian expression is controlled by CCA1 and LHY transcription factors. This chain is Granule-bound starch synthase 1, chloroplastic/amyloplastic, found in Arabidopsis thaliana (Mouse-ear cress).